The chain runs to 192 residues: Transmembrane protein 276 (192 aa).

The signal sequence occupies residues 1 to 32; the sequence is MAPKPGAEWSTALSHLVLGVVSLHAAVSTAEA. A run of 4 helical transmembrane segments spans residues 35 to 55, 63 to 83, 89 to 109, and 114 to 134; these read GAAAGFLLQVLAATTTLAPGL, AGAWVATVIGLPLLAFDFHWV, SANLLLGGGMVLAVAGGHLGP, and VAGQAMLLVVAVTILIVAVFT.

The protein localises to the membrane. The sequence is that of Transmembrane protein 276 from Homo sapiens (Human).